We begin with the raw amino-acid sequence, 453 residues long: UDP-glucose 6-dehydrogenase (453 aa).

NAD(+) is bound by residues 2 to 19 (RLCVIGAGYVGLVTAACF), V11, T121, and E158. Substrate-binding positions include 154–158 (EFLKE), K210, N214, 255–259 (FIYAG), and G263. C266 (nucleophile) is an active-site residue. K269 is an NAD(+) binding site. K327 contacts substrate. NAD(+) is bound at residue R334.

This sequence belongs to the UDP-glucose/GDP-mannose dehydrogenase family.

It carries out the reaction UDP-alpha-D-glucose + 2 NAD(+) + H2O = UDP-alpha-D-glucuronate + 2 NADH + 3 H(+). It functions in the pathway nucleotide-sugar biosynthesis; UDP-alpha-D-glucuronate biosynthesis; UDP-alpha-D-glucuronate from UDP-alpha-D-glucose: step 1/1. Its pathway is bacterial outer membrane biogenesis; lipopolysaccharide biosynthesis. The chain is UDP-glucose 6-dehydrogenase (udg) from Pseudomonas aeruginosa (strain ATCC 15692 / DSM 22644 / CIP 104116 / JCM 14847 / LMG 12228 / 1C / PRS 101 / PAO1).